A 413-amino-acid chain; its full sequence is DDQGHTHRNLVRKSVRNLSPAERRSLVHALKSLQEDSSADGFQSLASFHAQPPLCPYPEANKRFACCVHGMATFPEWHRLYTVQFEDALRRHGSVVGIPYWDTVVPQEDLPAFFNDEIWDDPLFHANFTNPFNGADIDFNHQKIARDINVDKLFKEGPKGYDTWSFKQYIYALEQEDYCDFEVQFEIAHNAIHAWVGGTEEYSMGHLHYASYDPVFILHHSNTDRLFALWQELQKFRGHDPNEVNCALEMMREPLKPFSFGAPYNLNPTTKEHSKPEDTFDYKGHFHYEYDHLELQGMNVQRLHDYINQQKERDRVFAGFLLEGIGTSAHLDFSICKIDGECTHAGYFDVLGGSLETPWQFDRLYKYEITDVLESKGLDVHDVFDIKITQTSWDNEDISTDRFPPPSVIYVPK.

A glycan (N-linked (GlcNAc...) (high mannose) asparagine) is linked at asparagine 17. Histidine 49 serves as a coordination point for Cu cation. Cysteines 55 and 66 form a disulfide. Residues 67 to 69 (CVH) constitute a cross-link (2'-(S-cysteinyl)-histidine (Cys-His)). The Cu cation site is built by histidine 69 and histidine 78. A glycan (N-linked (GlcNAc...) (high mannose) asparagine) is linked at asparagine 127. 2 disulfides stabilise this stretch: cysteine 179/cysteine 246 and cysteine 336/cysteine 342. Cu cation contacts are provided by histidine 189, histidine 193, and histidine 220.

Belongs to the tyrosinase family. Hemocyanin subfamily. In terms of assembly, decamers of large identical subunits, each containing 8 globular oxygen-binding functional units. Requires Cu(2+) as cofactor. Hemolymph.

The protein resides in the secreted. Its subcellular location is the extracellular space. Hemocyanins are copper-containing oxygen carriers occurring freely dissolved in the hemolymph of many mollusks and arthropods. In Rapana venosa (Veined rapa whelk), this protein is Hemocyanin type 2 unit e.